A 106-amino-acid chain; its full sequence is Large ribosomal subunit protein eL42 (106 aa).

This sequence belongs to the eukaryotic ribosomal protein eL42 family.

The sequence is that of Large ribosomal subunit protein eL42 (RPL44) from Debaryomyces hansenii (strain ATCC 36239 / CBS 767 / BCRC 21394 / JCM 1990 / NBRC 0083 / IGC 2968) (Yeast).